Consider the following 222-residue polypeptide: Latexin (222 aa).

The Cystatin LXN-type 1 domain maps to 1 to 97; sequence MEIPPTNYPA…NFTFEGETGK (97 aa). Lys-55 is modified (N6-acetyllysine). The tract at residues 98-117 is alpha-helical linker; the sequence is NPDEEDNTFYQRLKSMKEPL. Residues 118-222 form the Cystatin LXN-type 2 domain; that stretch reads EAQNIPDNFG…SRLPKEVQLE (105 aa).

Belongs to the protease inhibitor I47 (latexin) family. As to expression, highly expressed in heart, prostate, ovary, kidney, pancreas, and colon, moderate or low in other tissues including brain.

Its subcellular location is the cytoplasm. Hardly reversible, non-competitive, and potent inhibitor of CPA1, CPA2 and CPA4. May play a role in inflammation. The chain is Latexin (LXN) from Homo sapiens (Human).